Reading from the N-terminus, the 286-residue chain is MQPALAPAPHPSMQTSAQDHADQVLHDQLLAAHQHLSHPQQPRPQAPATQPPHMQPNTASPRDQNNIDPAISGSAILGAPPQTPPQPEPAPQESPKTYGKRPLSTSKRAAQNRAAQRAFRQRKESYIRKLEEQVKHQEAITEEYKALHAENYQLREYIINLQTRLLDSQGEVPELPGNIDLNQPRADLTLSAPELQRGNAASAGPAPAGPGPQQSQPNQNQGVGPNDDMNSLNRIAVAGLGMRKHPNEDANYLGNNFQARRPRTDDNQTGATETTKQEPDGLPVVS.

Residues 1–10 (MQPALAPAPH) show a composition bias toward pro residues. Positions 1 to 120 (MQPALAPAPH…QNRAAQRAFR (120 aa)) are disordered. The segment covering 26–40 (HDQLLAAHQHLSHPQ) has biased composition (low complexity). Over residues 41–54 (QPRPQAPATQPPHM) the composition is skewed to pro residues. A compositionally biased stretch (polar residues) spans 55–67 (QPNTASPRDQNNI). The segment covering 81-92 (PQTPPQPEPAPQ) has biased composition (pro residues). The bZIP domain occupies 102-165 (PLSTSKRAAQ…EYIINLQTRL (64 aa)). The tract at residues 103–126 (LSTSKRAAQNRAAQRAFRQRKESY) is basic motif. Low complexity predominate over residues 108 to 118 (RAAQNRAAQRA). A leucine-zipper region spans residues 130-161 (LEEQVKHQEAITEEYKALHAENYQLREYIINL). A disordered region spans residues 197 to 286 (RGNAASAGPA…QEPDGLPVVS (90 aa)). Residues 198-222 (GNAASAGPAPAGPGPQQSQPNQNQG) show a composition bias toward low complexity.

The protein belongs to the bZIP family.

The protein resides in the nucleus. Putative transcription factor. The sequence is that of Putative transcription factor kapC (kapC) from Aspergillus terreus (strain NIH 2624 / FGSC A1156).